The chain runs to 430 residues: Uric acid permease PucK (430 aa).

A run of 14 helical transmembrane segments spans residues 18 to 38, 43 to 63, 67 to 87, 97 to 117, 122 to 142, 163 to 183, 185 to 205, 209 to 229, 233 to 253, 274 to 294, 310 to 330, 333 to 353, 369 to 389, and 398 to 418; these read MLAM…AIGL, LTYL…LQLW, YFGI…GPMI, AIYG…GFFG, FFPP…LIPT, LLGF…KGFI, SIAI…MGKV, EVLE…PPTF, AVVT…GVYF, AEGL…TAFS, VIAI…AAAL, VIPT…VISY, LLII…PALF, and VLAG…HAFF.

It belongs to the nucleobase:cation symporter-2 (NCS2) (TC 2.A.40) family.

Its subcellular location is the cell membrane. Its function is as follows. Uptake of uric acid. In Bacillus subtilis (strain 168), this protein is Uric acid permease PucK (pucK).